A 631-amino-acid chain; its full sequence is DNA mismatch repair protein MutL (631 aa).

The segment at 389 to 423 is disordered; it reads GEREASRQAGGQRVQETQMSSYGSGQSGGRGRSYA.

Belongs to the DNA mismatch repair MutL/HexB family.

This protein is involved in the repair of mismatches in DNA. It is required for dam-dependent methyl-directed DNA mismatch repair. May act as a 'molecular matchmaker', a protein that promotes the formation of a stable complex between two or more DNA-binding proteins in an ATP-dependent manner without itself being part of a final effector complex. This chain is DNA mismatch repair protein MutL, found in Shewanella loihica (strain ATCC BAA-1088 / PV-4).